A 129-amino-acid polypeptide reads, in one-letter code: Transcription factor bHLH138 (129 aa).

Over residues methionine 1–glycine 18 the composition is skewed to basic and acidic residues. Positions methionine 1 to threonine 24 are disordered. The region spanning serine 19–leucine 68 is the bHLH domain.

Belongs to the bHLH protein family.

It localises to the nucleus. In Arabidopsis thaliana (Mouse-ear cress), this protein is Transcription factor bHLH138.